A 228-amino-acid polypeptide reads, in one-letter code: MATSLTWHDVLAQEKQQPYFINTLEFVGKERAAGKTIYPPQKDVFNAFRFTELHQVKVVILGQDPYHGPNQAHGLSFSVRPGVPAPPSLANIYKELASDIPGFEIPRHGFLQSWAEQGVLLLNTVLTVEAGQAHSHANLGWETFTDRVIAALNEQREGLVFLLWGSHAQKKGNIIDQRRHHILKSPHPSPLSAHRGFLGCKHFSQANQLLEQQGLSPIDWTPRLPEEA.

The active-site Proton acceptor is Asp-64.

Belongs to the uracil-DNA glycosylase (UDG) superfamily. UNG family.

It is found in the cytoplasm. It catalyses the reaction Hydrolyzes single-stranded DNA or mismatched double-stranded DNA and polynucleotides, releasing free uracil.. Excises uracil residues from the DNA which can arise as a result of misincorporation of dUMP residues by DNA polymerase or due to deamination of cytosine. The protein is Uracil-DNA glycosylase of Pectobacterium carotovorum subsp. carotovorum (strain PC1).